The chain runs to 321 residues: Lipoyl synthase (321 aa).

Residues cysteine 60, cysteine 65, cysteine 71, cysteine 86, cysteine 90, cysteine 93, and serine 299 each contribute to the [4Fe-4S] cluster site. In terms of domain architecture, Radical SAM core spans 72 to 288 (WEKKHATFMI…ETIGRTKGFL (217 aa)).

Belongs to the radical SAM superfamily. Lipoyl synthase family. [4Fe-4S] cluster is required as a cofactor.

The protein resides in the cytoplasm. It carries out the reaction [[Fe-S] cluster scaffold protein carrying a second [4Fe-4S](2+) cluster] + N(6)-octanoyl-L-lysyl-[protein] + 2 oxidized [2Fe-2S]-[ferredoxin] + 2 S-adenosyl-L-methionine + 4 H(+) = [[Fe-S] cluster scaffold protein] + N(6)-[(R)-dihydrolipoyl]-L-lysyl-[protein] + 4 Fe(3+) + 2 hydrogen sulfide + 2 5'-deoxyadenosine + 2 L-methionine + 2 reduced [2Fe-2S]-[ferredoxin]. Its pathway is protein modification; protein lipoylation via endogenous pathway; protein N(6)-(lipoyl)lysine from octanoyl-[acyl-carrier-protein]: step 2/2. Its function is as follows. Catalyzes the radical-mediated insertion of two sulfur atoms into the C-6 and C-8 positions of the octanoyl moiety bound to the lipoyl domains of lipoate-dependent enzymes, thereby converting the octanoylated domains into lipoylated derivatives. The sequence is that of Lipoyl synthase from Mesorhizobium japonicum (strain LMG 29417 / CECT 9101 / MAFF 303099) (Mesorhizobium loti (strain MAFF 303099)).